Reading from the N-terminus, the 197-residue chain is dITP/XTP pyrophosphatase (197 aa).

Position 8 to 13 (Thr8 to Lys13) interacts with substrate. Mg(2+)-binding residues include Glu42 and Asp71. The active-site Proton acceptor is Asp71. Residues Ser72, Phe154–Asp157, Lys177, and His182–Arg183 each bind substrate.

The protein belongs to the HAM1 NTPase family. Homodimer. The cofactor is Mg(2+).

It carries out the reaction XTP + H2O = XMP + diphosphate + H(+). The catalysed reaction is dITP + H2O = dIMP + diphosphate + H(+). The enzyme catalyses ITP + H2O = IMP + diphosphate + H(+). In terms of biological role, pyrophosphatase that catalyzes the hydrolysis of nucleoside triphosphates to their monophosphate derivatives, with a high preference for the non-canonical purine nucleotides XTP (xanthosine triphosphate), dITP (deoxyinosine triphosphate) and ITP. Seems to function as a house-cleaning enzyme that removes non-canonical purine nucleotides from the nucleotide pool, thus preventing their incorporation into DNA/RNA and avoiding chromosomal lesions. In Oceanobacillus iheyensis (strain DSM 14371 / CIP 107618 / JCM 11309 / KCTC 3954 / HTE831), this protein is dITP/XTP pyrophosphatase.